A 76-amino-acid chain; its full sequence is Theta defensin subunit B (76 aa).

An N-terminal signal peptide occupies residues 1-22 (MRTFALLTAMLLLVALQPQAEA). Positions 23 to 64 (RQARADEAAAQQQPGADDQGMAHSFTRPENAALPLSESAKGL) are excised as a propeptide. Residues 24–54 (QARADEAAAQQQPGADDQGMAHSFTRPENAA) are disordered. A compositionally biased stretch (low complexity) spans 30–44 (AAAQQQPGADDQGMA). Residue arginine 65 forms a Cyclopeptide (Arg-Cys) (interchain with C-73 in subunit A); in form BTD-1 linkage. Arginine 65 participates in a covalent cross-link: Cyclopeptide (Arg-Cys) (interchain with C-73 in subunit B); in form BTD-2. Cysteine 68 and cysteine 73 are disulfide-bonded. Residue cysteine 73 forms a Cyclopeptide (Cys-Arg) (interchain with R-65 in subunit A); in form BTD-1 linkage. Cysteine 73 is covalently cross-linked (Cyclopeptide (Cys-Arg) (interchain with R-65 in subunit B); in form BTD-2). A propeptide spanning residues 74 to 76 (QLL) is cleaved from the precursor.

Belongs to the alpha-defensin family. Theta subfamily. BTD-1 is a cyclic heterodimer composed of subunits A and B; disulfide-linked. BTD-2 is a cyclic homodimer composed of two subunits B; disulfide-linked. In terms of processing, forms a cyclic peptide with subunit A (BTD-1), or subunit B (BTD-2). An additional intersubunit disulfide bond is formed.

Functionally, BTD-1 and BTD-2 have antimicrobial activity against the Gram-negative bacterium E.coli ML35, the Gram-positive bacterium S.aureus 502a, and the fungus C.albicans 16820. BTD-2 is more effective against E.coli than BTD-1. This chain is Theta defensin subunit B (BTDB), found in Papio anubis (Olive baboon).